Consider the following 400-residue polypeptide: Telomeric repeat-binding factor 2-interacting protein 1 (400 aa).

A2 is modified (N-acetylalanine). Phosphoserine occurs at positions 36 and 43. Residues 78 to 101 form the BRCT domain; sequence FISTQYILDCVERNERLELEAYRL. A disordered region spans residues 105 to 126; it reads SAADTGSEAKPGALAEGAAEPE. A compositionally biased stretch (low complexity) spans 112 to 125; that stretch reads EAKPGALAEGAAEP. K114 participates in a covalent cross-link: Glycyl lysine isopeptide (Lys-Gly) (interchain with G-Cter in SUMO2). The 61-residue stretch at 128–188 folds into the Myb-like domain; the sequence is QRLAGRIAFT…SLKDRYLKHL (61 aa). Residues S154 and S156 each carry the phosphoserine modification. Residue K194 forms a Glycyl lysine isopeptide (Lys-Gly) (interchain with G-Cter in SUMO2) linkage. Disordered stretches follow at residues 196 to 244 and 264 to 311; these read LLGD…EEIQ and VVVD…SQPE. Phosphoserine occurs at positions 203 and 206. Glycyl lysine isopeptide (Lys-Gly) (interchain with G-Cter in SUMO2) cross-links involve residues K208, K212, and K240. Acidic residues predominate over residues 280-305; that stretch reads CDDDPPTPEEDSETQPDEEEEEEEEE. K373 is covalently cross-linked (Glycyl lysine isopeptide (Lys-Gly) (interchain with G-Cter in SUMO2)). The short motif at 384-400 is the Nuclear localization signal element; it reads KKFGAQNVARRIEFRKK.

This sequence belongs to the RAP1 family. Associates with the I-kappa-B-kinase (IKK) core complex, composed of CHUK, IKBKB and IKBKG. Homodimer. Component of the shelterin complex (telosome) composed of TERF1, TERF2, TINF2, TERF2IP ACD and POT1. Interacts with TERF2 (but not TERF1) with its C-terminus. Interacts with SLX4/BTBD12. Interacts with TERF2; the interaction is direct.

The protein localises to the nucleus. Its subcellular location is the cytoplasm. It localises to the chromosome. The protein resides in the telomere. Its function is as follows. Acts both as a regulator of telomere function and as a transcription regulator. Involved in the regulation of telomere length and protection as a component of the shelterin complex (telosome). In contrast to other components of the shelterin complex, it is dispensible for telomere capping and does not participate in the protection of telomeres against non-homologous end-joining (NHEJ)-mediated repair. Instead, it is required to negatively regulate telomere recombination and is essential for repressing homology-directed repair (HDR), which can affect telomere length. Does not bind DNA directly: recruited to telomeric double-stranded 5'-TTAGGG-3' repeats via its interaction with TERF2. Independently of its function in telomeres, also acts as a transcription regulator: recruited to extratelomeric 5'-TTAGGG-3' sites via its association with TERF2 or other factors, and regulates gene expression. When cytoplasmic, associates with the I-kappa-B-kinase (IKK) complex and acts as a regulator of the NF-kappa-B signaling by promoting IKK-mediated phosphorylation of RELA/p65, leading to activate expression of NF-kappa-B target genes. The chain is Telomeric repeat-binding factor 2-interacting protein 1 (TERF2IP) from Macaca fascicularis (Crab-eating macaque).